Reading from the N-terminus, the 362-residue chain is 3-isopropylmalate dehydrogenase (362 aa).

The substrate site is built by arginine 97, arginine 107, arginine 135, and aspartate 225. Residues aspartate 225, aspartate 249, and aspartate 253 each coordinate Mg(2+). Residue 283–295 coordinates NAD(+); that stretch reads GSAPDIAHKNLAN.

This sequence belongs to the isocitrate and isopropylmalate dehydrogenases family. LeuB type 1 subfamily. Homodimer. It depends on Mg(2+) as a cofactor. Requires Mn(2+) as cofactor.

It is found in the cytoplasm. It catalyses the reaction (2R,3S)-3-isopropylmalate + NAD(+) = 4-methyl-2-oxopentanoate + CO2 + NADH. Its pathway is amino-acid biosynthesis; L-leucine biosynthesis; L-leucine from 3-methyl-2-oxobutanoate: step 3/4. Catalyzes the oxidation of 3-carboxy-2-hydroxy-4-methylpentanoate (3-isopropylmalate) to 3-carboxy-4-methyl-2-oxopentanoate. The product decarboxylates to 4-methyl-2 oxopentanoate. The chain is 3-isopropylmalate dehydrogenase from Prochlorococcus marinus (strain SARG / CCMP1375 / SS120).